The sequence spans 147 residues: UPF0260 protein Ent638_2368 (147 aa).

Belongs to the UPF0260 family.

The protein is UPF0260 protein Ent638_2368 of Enterobacter sp. (strain 638).